Reading from the N-terminus, the 425-residue chain is Alpha/beta hydrolase xenA (425 aa).

The active site involves aspartate 366.

This sequence belongs to the AB hydrolase superfamily. FUS2 hydrolase family. Homodimer.

It functions in the pathway mycotoxin biosynthesis. Its function is as follows. Alpha/beta hydrolase; part of the gene cluster that mediates the biosynthesis of xenoacremones such as xenoacremone A, a compound that shows inhibitory activity toward the PI3K/AKT signaling pathway and which has the ability to induce apoptosis of A549 lung cancer cells. Within the pathway, cooperation of the hybrid PKS-NRPS xenE and the trans-acting enoyl reductase xenG is responsible for the formation of the reduced tyrosine-nonaketide derivative. The alpha/beta hydrolase xenA then accelerates intramolecular nucleophilic attack to give a pyrrolidone derivative. Subsequently, three enzymes, xenF, xenD, and xenC, coordinately participate in the conversion to xenoacremone B. XenF catalyzes sigmatropic rearrangement to form an A-ring, which leads to an unusual intermediate with a hexane ring, which is required for the formation of the tricarbocyclic product. Epoxidation catalyzed by xenD and the formation of the paracyclophane ether catalyzed by xenC initiate a spontaneous intramolecular Diels-Alder (IMDA) reaction to yield xenoacremone B. Spontaneous hydration of xenoacremone B leads to the formation of xenoacremone A, which undergoes subsequent methylation to afford xenoacremone C. The protein is Alpha/beta hydrolase xenA of Xenoacremonium sinensis (Endophyte fungus).